A 295-amino-acid polypeptide reads, in one-letter code: MIEVPTTTDSQKLLHQLNALLEQESRCQPKVCGLRLIESAHDNGLRMTARLRDFEVKDLLSLTQFFGFDTETFSLAVNLLDRFLSKMKVQPKHLGCVGLSCFYLAVKSLEEERNVPLATDLIRISQYRFTVSDLMRMEKIVLEKVCWKVKATTAFQFLQLYYSLLQESLPYERRNSLNFERLEAQLKACYCRIIFSKAKPSVLALSIIALEIQALKCVELAEGAECLQKHSKINGRDLTFWQELVSKCLTEYSSNKCSKPNVQKLKWIVSGRTARQLKHSYYRITHLPTIPEMVP.

It belongs to the cyclin family. Cyclin G subfamily.

It is found in the nucleus. May play a role in growth regulation. Is associated with G2/M phase arrest in response to DNA damage. May be an intermediate by which p53 mediates its role as an inhibitor of cellular proliferation. This chain is Cyclin-G1 (CCNG1), found in Sus scrofa (Pig).